A 238-amino-acid chain; its full sequence is MARLAINVDHVATVRQARRASEPDPVTAAALAELAGAHGIVVHLREDRRHIQDRDVQVLRQTVKSKLNLEMAATREMIQIALNIKPEMVTLVPEKRQELTTEGGLDVVSFEGALEEAIKTLHEGGIAVSLFINPDPRHIKVAHRLEAEYVEIHTGMFAEADSYTRRQEEYERVVTSAKLARKLGLGAHAGHGIGYQNVLWLRNIPEIQEFSIGHAVIARAVLVGMERAVREMLALVNG.

N7 contributes to the 3-amino-2-oxopropyl phosphate binding site. 9–10 is a binding site for 1-deoxy-D-xylulose 5-phosphate; sequence DH. Residue R18 participates in 3-amino-2-oxopropyl phosphate binding. H43 functions as the Proton acceptor in the catalytic mechanism. The 1-deoxy-D-xylulose 5-phosphate site is built by R45 and H50. E70 (proton acceptor) is an active-site residue. Residue T100 coordinates 1-deoxy-D-xylulose 5-phosphate. H191 functions as the Proton donor in the catalytic mechanism. 3-amino-2-oxopropyl phosphate-binding positions include G192 and 213-214; that span reads GH.

This sequence belongs to the PNP synthase family. In terms of assembly, homooctamer; tetramer of dimers.

It localises to the cytoplasm. The catalysed reaction is 3-amino-2-oxopropyl phosphate + 1-deoxy-D-xylulose 5-phosphate = pyridoxine 5'-phosphate + phosphate + 2 H2O + H(+). It participates in cofactor biosynthesis; pyridoxine 5'-phosphate biosynthesis; pyridoxine 5'-phosphate from D-erythrose 4-phosphate: step 5/5. Catalyzes the complicated ring closure reaction between the two acyclic compounds 1-deoxy-D-xylulose-5-phosphate (DXP) and 3-amino-2-oxopropyl phosphate (1-amino-acetone-3-phosphate or AAP) to form pyridoxine 5'-phosphate (PNP) and inorganic phosphate. This chain is Pyridoxine 5'-phosphate synthase, found in Syntrophobacter fumaroxidans (strain DSM 10017 / MPOB).